Consider the following 314-residue polypeptide: Coiled-coil domain-containing protein 42 like-2 (314 aa).

2 coiled-coil regions span residues 34-133 (RLLE…KGTL) and 175-231 (NKLL…FQWE).

This sequence belongs to the CFAP73 family.

This chain is Coiled-coil domain-containing protein 42 like-2, found in Xenopus tropicalis (Western clawed frog).